The sequence spans 382 residues: Cell division protein DivIB (382 aa).

The Cytoplasmic portion of the chain corresponds to 1–103 (MAKDKEKQSD…SATQIAFQKS (103 aa)). Composition is skewed to basic and acidic residues over residues 36 to 49 (EKKLKEKLLSDKKA) and 60 to 70 (VELKTDEKTDS). The interval 36-92 (EKKLKEKLLSDKKAQQQAQNASEAVELKTDEKTDSQEIESETTSKPKKTKKVRQPKE) is disordered. Residues 104–124 (LPVLLGALLLMAVSIFMITPY) form a helical membrane-spanning segment. The POTRA domain maps to 125–196 (SKKKEFSVRG…NHFLFNVIEF (72 aa)). The Extracellular segment spans residues 125-382 (SKKKEFSVRG…PETVLEQAHG (258 aa)). The interval 322 to 382 (QEIENQPEVP…PETVLEQAHG (61 aa)) is disordered. Positions 338 to 352 (AADKEGDKPGEHQEQ) are enriched in basic and acidic residues.

This sequence belongs to the FtsQ/DivIB family. DivIB subfamily.

The protein localises to the cell membrane. Cell division protein that may be involved in stabilizing or promoting the assembly of the division complex. The polypeptide is Cell division protein DivIB (Streptococcus pyogenes serotype M2 (strain MGAS10270)).